Consider the following 139-residue polypeptide: Large ribosomal subunit protein uL22 (139 aa).

The tract at residues 1–21 (MTAPEQTYRNKKQRKQQHKLR) is disordered. A compositionally biased stretch (basic residues) spans 9–21 (RNKKQRKQQHKLR).

It belongs to the universal ribosomal protein uL22 family. In terms of assembly, part of the 50S ribosomal subunit.

Functionally, this protein binds specifically to 23S rRNA; its binding is stimulated by other ribosomal proteins, e.g. L4, L17, and L20. It is important during the early stages of 50S assembly. It makes multiple contacts with different domains of the 23S rRNA in the assembled 50S subunit and ribosome. In terms of biological role, the globular domain of the protein is located near the polypeptide exit tunnel on the outside of the subunit, while an extended beta-hairpin is found that lines the wall of the exit tunnel in the center of the 70S ribosome. In Deinococcus geothermalis (strain DSM 11300 / CIP 105573 / AG-3a), this protein is Large ribosomal subunit protein uL22.